The primary structure comprises 385 residues: Zinc finger protein B385R (385 aa).

Residues 166–190 form a C2H2-type zinc finger; the sequence is LQCPNCGCIQELMGTIFDETHFYNH.

This sequence belongs to the asfivirus B385R family.

This Ornithodoros (relapsing fever ticks) protein is Zinc finger protein B385R.